A 532-amino-acid chain; its full sequence is Flavin-containing monooxygenase 1 (532 aa).

The Lumenal portion of the chain corresponds to 1–510; the sequence is MVKRVAIVGA…TRTIQESPSS (510 aa). Residues 9–13, Glu-32, 40–41, and 61–62 each bind FAD; these read GAGVS, LW, and NS. NADP(+) is bound by residues 60–61 and 195–198; these read SN and SGTD. Residues 511-531 form a helical membrane-spanning segment; sequence FETLLKLFSFLALLIAVFLIF. A topological domain (cytoplasmic) is located at residue Leu-532.

This sequence belongs to the FMO family. It depends on FAD as a cofactor. Liver.

It is found in the endoplasmic reticulum membrane. It catalyses the reaction hypotaurine + NADPH + O2 + H(+) = taurine + NADP(+) + H2O. The catalysed reaction is hypotaurine + NADH + O2 + H(+) = taurine + NAD(+) + H2O. It carries out the reaction trimethylamine + NADPH + O2 = trimethylamine N-oxide + NADP(+) + H2O. The enzyme catalyses N,N-dimethylaniline + NADPH + O2 + H(+) = N,N-dimethylaniline N-oxide + NADP(+) + H2O. Functionally, broad spectrum monooxygenase that catalyzes the oxygenation of a wide variety of nitrogen- and sulfur-containing compounds including xenobiotics. Catalyzes the S-oxygenation of hypotaurine to produce taurine, an organic osmolyte involved in cell volume regulation as well as a variety of cytoprotective and developmental processes. In vitro, catalyzes the N-oxygenation of trimethylamine (TMA) to produce trimethylamine N-oxide (TMAO) and could therefore participate to the detoxification of this compound that is generated by the action of gut microbiota from dietary precursors such as choline, choline containing compounds, betaine or L-carnitine. The chain is Flavin-containing monooxygenase 1 from Mus musculus (Mouse).